We begin with the raw amino-acid sequence, 222 residues long: Probable transaldolase 2 (222 aa).

Residue Lys-90 is the Schiff-base intermediate with substrate of the active site.

It belongs to the transaldolase family. Type 3B subfamily.

The protein resides in the cytoplasm. It carries out the reaction D-sedoheptulose 7-phosphate + D-glyceraldehyde 3-phosphate = D-erythrose 4-phosphate + beta-D-fructose 6-phosphate. It participates in carbohydrate degradation; pentose phosphate pathway; D-glyceraldehyde 3-phosphate and beta-D-fructose 6-phosphate from D-ribose 5-phosphate and D-xylulose 5-phosphate (non-oxidative stage): step 2/3. In terms of biological role, transaldolase is important for the balance of metabolites in the pentose-phosphate pathway. The protein is Probable transaldolase 2 of Bacillus cereus (strain ATCC 14579 / DSM 31 / CCUG 7414 / JCM 2152 / NBRC 15305 / NCIMB 9373 / NCTC 2599 / NRRL B-3711).